The chain runs to 205 residues: Probable DNA-binding protein (205 aa).

The tract at residues 140 to 168 is disordered; it reads GEGDGAPRPACPDFSTRGAETGNQGVQPG.

The polypeptide is Probable DNA-binding protein (Homo sapiens (Human)).